The primary structure comprises 382 residues: Mannitol-1-phosphate 5-dehydrogenase (382 aa).

NAD(+) is bound at residue 4–15 (AVHFGAGNIGRG).

It belongs to the mannitol dehydrogenase family.

It carries out the reaction D-mannitol 1-phosphate + NAD(+) = beta-D-fructose 6-phosphate + NADH + H(+). This chain is Mannitol-1-phosphate 5-dehydrogenase, found in Vibrio vulnificus (strain CMCP6).